Consider the following 30-residue polypeptide: Protein ScvA (30 aa).

The disordered stretch occupies residues 1-30; the sequence is MERQNVQQQRGKDQRPQRPGASNPRRPNQR.

Functionally, might be involved in DNA-binding; the protein binds DNA in gel-shift assays and immunogold electron microscopy shows labelling of condensed chromatin. The sequence is that of Protein ScvA (scvA) from Coxiella burnetii (strain RSA 493 / Nine Mile phase I).